An 896-amino-acid polypeptide reads, in one-letter code: C-type lectin domain-containing protein 180 (896 aa).

Positions 1 to 18 (MRHLIFTGFVLTLTALEA) are cleaved as a signal peptide. Residues 54 to 178 (PWGDLYQFRA…CESTSPDHHA (125 aa)) enclose the C-type lectin domain. Asn133 carries N-linked (GlcNAc...) asparagine glycosylation. Cys154 and Cys169 form a disulfide bridge. Asn221 and Asn235 each carry an N-linked (GlcNAc...) asparagine glycan. Disordered stretches follow at residues 243 to 264 (STVK…SVSK), 354 to 436 (VKQE…LAPE), 492 to 519 (EKLE…EEQK), and 557 to 809 (KVKA…TTKP). Residues 250–260 (SEEETSSEEEE) show a composition bias toward acidic residues. Basic and acidic residues-rich tracts occupy residues 354-382 (VKQE…KISE) and 395-406 (DMPKADIEPPKE). Over residues 407–426 (EDCDEEGSGSGSGEEDEKDE) the composition is skewed to acidic residues. Residues 427-436 (SSEKIELAPE) show a composition bias toward basic and acidic residues. 3 stretches are compositionally biased toward basic and acidic residues: residues 575–590 (KSAK…KVGN), 607–663 (QNRE…ETKL), and 683–692 (EEPKSDKDSE). The segment covering 727–739 (STTTESTTVAVKE) has biased composition (low complexity). Positions 740 to 768 (VPVDEIEKIAKLEAKQHTEDEKVTVETKQ) are enriched in basic and acidic residues. Positions 773 to 809 (TPAPTTSEKTSTTAAPSTKPAEETTTTTEAPSTTTKP) are enriched in low complexity.

It is found in the secreted. In Caenorhabditis elegans, this protein is C-type lectin domain-containing protein 180 (clec-180).